The primary structure comprises 386 residues: Glucose-1-phosphate adenylyltransferase (386 aa).

Alpha-D-glucose 1-phosphate is bound by residues Tyr100, Gly165, 180–181 (EK), and Ser191.

This sequence belongs to the bacterial/plant glucose-1-phosphate adenylyltransferase family. As to quaternary structure, homotetramer.

The catalysed reaction is alpha-D-glucose 1-phosphate + ATP + H(+) = ADP-alpha-D-glucose + diphosphate. Its pathway is glycan biosynthesis; glycogen biosynthesis. Its function is as follows. Involved in the biosynthesis of ADP-glucose, a building block required for the elongation reactions to produce glycogen. Catalyzes the reaction between ATP and alpha-D-glucose 1-phosphate (G1P) to produce pyrophosphate and ADP-Glc. The polypeptide is Glucose-1-phosphate adenylyltransferase (Clostridium botulinum (strain Eklund 17B / Type B)).